A 302-amino-acid chain; its full sequence is Oxygen-dependent coproporphyrinogen-III oxidase (302 aa).

Ser-90 lines the substrate pocket. The a divalent metal cation site is built by His-94 and His-104. The active-site Proton donor is the His-104. 106 to 108 is a binding site for substrate; sequence NVR. A divalent metal cation is bound by residues His-143 and His-173. Residues 238-273 are important for dimerization; the sequence is YVEFNLIYDRGTIFGLQSNGRTESILLSMPPIVKWR.

It belongs to the aerobic coproporphyrinogen-III oxidase family. Homodimer. A divalent metal cation is required as a cofactor.

It is found in the cytoplasm. It carries out the reaction coproporphyrinogen III + O2 + 2 H(+) = protoporphyrinogen IX + 2 CO2 + 2 H2O. The protein operates within porphyrin-containing compound metabolism; protoporphyrin-IX biosynthesis; protoporphyrinogen-IX from coproporphyrinogen-III (O2 route): step 1/1. Its function is as follows. Involved in the heme biosynthesis. Catalyzes the aerobic oxidative decarboxylation of propionate groups of rings A and B of coproporphyrinogen-III to yield the vinyl groups in protoporphyrinogen-IX. This Methylobacillus flagellatus (strain ATCC 51484 / DSM 6875 / VKM B-1610 / KT) protein is Oxygen-dependent coproporphyrinogen-III oxidase.